We begin with the raw amino-acid sequence, 670 residues long: Kinesin-like protein KIF2B (670 aa).

Thr-122 bears the Phosphothreonine; by PLK1 mark. Residues 146-173 (CLQEIEKVQKQREKRRRLQQEIRARRAL) are a coiled coil. Ser-201 is modified (phosphoserine; by PLK1). The 331-residue stretch at 210 to 540 (RICVCVRKRP…LRYANRVKEL (331 aa)) folds into the Kinesin motor domain. Position 300–307 (300–307 (GQTGSGKT)) interacts with ATP.

It belongs to the TRAFAC class myosin-kinesin ATPase superfamily. Kinesin family. MCAK/KIF2 subfamily. Post-translationally, phosphorylation at Thr-122 by PLK1 is required for activity in the correction of kinetochore-microtubules attachment errors, while phosphorylation at Ser-201 also by PLK1 is required for the kinetochore localization and activity in prometaphase.

The protein resides in the cytoplasm. The protein localises to the cytoskeleton. It is found in the microtubule organizing center. Its subcellular location is the centrosome. It localises to the spindle. The protein resides in the chromosome. The protein localises to the centromere. It is found in the kinetochore. Its function is as follows. Plus end-directed microtubule-dependent motor required for spindle assembly and chromosome movement during mitosis. Has microtubule depolymerization activity. Plays a role in chromosome congression. This chain is Kinesin-like protein KIF2B (KIF2B), found in Macaca fascicularis (Crab-eating macaque).